The sequence spans 826 residues: Dolichyl-diphosphooligosaccharide--protein glycosyltransferase subunit STT3B (826 aa).

The tract at residues 1 to 60 is disordered; the sequence is MAEPSAPESKHKSSLNSSPWSGLMALGNSRHGHHGPGAQCAHKAAGGVAPPKPAPAGLSG. Ala2 is modified (N-acetylalanine). Over 2-41 the chain is Cytoplasmic; the sequence is AEPSAPESKHKSSLNSSPWSGLMALGNSRHGHHGPGAQCA. Phosphoserine occurs at positions 13, 18, and 29. The helical transmembrane segment at 42-86 threads the bilayer; the sequence is HKAAGGVAPPKPAPAGLSGGLSQPAGWQSLLSFTILFLAWLAGFS. At 87 to 173 the chain is on the lumenal side; the sequence is SRLFAVIRFE…VHIRDVCVFL (87 aa). The short motif at 101 to 103 is the DXD motif 1 element; the sequence is EFD. Residue Asp103 participates in Mn(2+) binding. Residues 174 to 192 traverse the membrane as a helical segment; sequence APTFSGLTSISTFLLTREL. Residues 193 to 194 lie on the Cytoplasmic side of the membrane; it reads WN. The helical transmembrane segment at 195 to 212 threads the bilayer; the sequence is QGAGLLAACFIAIVPGYI. The Lumenal segment spans residues 213-223; the sequence is SRSVAGSFDNE. Residues Asp221 and Glu223 each contribute to the Mn(2+) site. The short motif at 221–223 is the DXD motif 2 element; sequence DNE. The helical transmembrane segment at 224–243 threads the bilayer; sequence GIAIFALQFTYYLWVKSVKT. Topologically, residues 244 to 245 are cytoplasmic; that stretch reads GS. The helical transmembrane segment at 246 to 260 threads the bilayer; the sequence is VFWTMCCCLSYFYMV. The Lumenal segment spans residues 261 to 265; the sequence is SAWGG. The chain crosses the membrane as a helical span at residues 266 to 282; sequence YVFIINLIPLHVFVLLL. Topologically, residues 283-287 are cytoplasmic; that stretch reads MQRYS. A helical membrane pass occupies residues 288 to 313; that stretch reads KRVYIAYSTFYIVGLILSMQIPFVGF. At 314–321 the chain is on the lumenal side; it reads QPIRTSEH. A helical transmembrane segment spans residues 322-341; the sequence is MAAAGVFALLQAYAFLQYLR. The Cytoplasmic portion of the chain corresponds to 342–350; sequence DRLTKQEFQ. Residues 351–371 form a helical membrane-spanning segment; it reads TLFFLGVSLAAGAVFLSVIYL. Residues 372–410 lie on the Lumenal side of the membrane; that stretch reads TYTGYIAPWSGRFYSLWDTGYAKIHIPIIASVSEHQPTT. Residues 402 to 405 carry the SVSE motif motif; that stretch reads SVSE. A helical membrane pass occupies residues 411 to 433; it reads WVSFFFDLHILVCTFPAGLWFCI. Topologically, residues 434–439 are cytoplasmic; it reads KNINDE. A helical transmembrane segment spans residues 440-456; it reads RVFVALYAISAVYFAGV. Topologically, residues 457–460 are lumenal; it reads MVRL. Arg459 is a dolichyl diphosphooligosaccharide binding site. A helical membrane pass occupies residues 461–482; sequence MLTLTPVVCMLSAIAFSNVFEH. The Cytoplasmic portion of the chain corresponds to 483 to 526; that stretch reads YLGDDMKRENPPVEDSSDEDDKRNPGNLYDKAGKVRKHVTEQEK. The segment at 490 to 512 is disordered; that stretch reads RENPPVEDSSDEDDKRNPGNLYD. Ser498 and Ser499 each carry phosphoserine. The helical transmembrane segment at 527 to 552 threads the bilayer; sequence TEEGLGPNIKSIVTMLMLMLLMMFAV. Residues 553–826 lie on the Lumenal side of the membrane; sequence HCTWVTSNAY…KGKKISKKTV (274 aa). Positions 604 to 606 are interacts with target acceptor peptide in protein substrate; the sequence is WWD. A WWDYG motif motif is present at residues 604–608; sequence WWDYG. Tyr609 contributes to the dolichyl diphosphooligosaccharide binding site. Residues Asn616 and Asn623 are each glycosylated (N-linked (GlcNAc...) asparagine). A glycan (N-linked (GlcNAc...) (high mannose) asparagine) is linked at Asn627. N-linked (GlcNAc...) asparagine glycosylation occurs at Asn641. The short motif at 671–678 is the DK motif element; that stretch reads DINKFLWM.

Belongs to the STT3 family. In terms of assembly, component of the oligosaccharyltransferase (OST) complex. There are 2 OST complexes, OST-A and OST-B, which contain STT3A or STT3B as catalytic subunit, respectively. OST-A and OST-B contain common core subunits RPN1, RPN2, OST48, OST4, DAD1 and TMEM258, and OST-B contains either MAGT1 or TUSC3 as specific accessory subunit. Mg(2+) is required as a cofactor. It depends on Mn(2+) as a cofactor.

The protein resides in the endoplasmic reticulum. It is found in the endoplasmic reticulum membrane. The catalysed reaction is a di-trans,poly-cis-dolichyl diphosphooligosaccharide + L-asparaginyl-[protein] = N(4)-(oligosaccharide-(1-&gt;4)-N-acetyl-beta-D-glucosaminyl-(1-&gt;4)-N-acetyl-beta-D-glucosaminyl)-L-asparaginyl-[protein] + a di-trans,poly-cis-dolichyl diphosphate + H(+). It participates in protein modification; protein glycosylation. Its function is as follows. Catalytic subunit of the oligosaccharyl transferase (OST) complex that catalyzes the initial transfer of a defined glycan (Glc(3)Man(9)GlcNAc(2) in eukaryotes) from the lipid carrier dolichol-pyrophosphate to an asparagine residue within an Asn-X-Ser/Thr consensus motif in nascent polypeptide chains, the first step in protein N-glycosylation. N-glycosylation occurs cotranslationally and the complex associates with the Sec61 complex at the channel-forming translocon complex that mediates protein translocation across the endoplasmic reticulum (ER). All subunits are required for a maximal enzyme activity. This subunit contains the active site and the acceptor peptide and donor lipid-linked oligosaccharide (LLO) binding pockets. STT3B is present in a small subset of OST complexes and mediates both cotranslational and post-translational N-glycosylation of target proteins: STT3B-containing complexes are required for efficient post-translational glycosylation and while they are less competent than STT3A-containing complexes for cotranslational glycosylation, they have the ability to mediate glycosylation of some nascent sites that are not accessible for STT3A. STT3B-containing complexes also act post-translationally and mediate modification of skipped glycosylation sites in unfolded proteins. Plays a role in ER-associated degradation (ERAD) pathway that mediates ubiquitin-dependent degradation of misfolded endoplasmic reticulum proteins by mediating N-glycosylation of unfolded proteins, which are then recognized by the ERAD pathway and targeted for degradation. The protein is Dolichyl-diphosphooligosaccharide--protein glycosyltransferase subunit STT3B of Canis lupus familiaris (Dog).